Here is a 420-residue protein sequence, read N- to C-terminus: uncharacterized protein (420 aa).

Residues 79-420 form the YcaO domain; sequence GKGIDNEAAM…AVNTIRGAES (342 aa).

This is an uncharacterized protein from Rhizobium leguminosarum bv. trifolii.